Consider the following 78-residue polypeptide: Beta-defensin 105A (78 aa).

A signal peptide spans 1–27 (MALIRKTFYFLFAVFFVLVQLPSECQA). 3 cysteine pairs are disulfide-bonded: cysteine 43–cysteine 74, cysteine 53–cysteine 67, and cysteine 57–cysteine 73.

It belongs to the beta-defensin family.

Its subcellular location is the secreted. In terms of biological role, has antimicrobial activity. The sequence is that of Beta-defensin 105A (DEFB105A) from Pongo pygmaeus (Bornean orangutan).